We begin with the raw amino-acid sequence, 638 residues long: 1-deoxy-D-xylulose-5-phosphate synthase (638 aa).

Residues His79 and 120–122 (AHS) each bind thiamine diphosphate. Asp151 serves as a coordination point for Mg(2+). Thiamine diphosphate is bound by residues 152-153 (GA), Asn180, Tyr289, and Glu371. Asn180 lines the Mg(2+) pocket.

Belongs to the transketolase family. DXPS subfamily. In terms of assembly, homodimer. Requires Mg(2+) as cofactor. The cofactor is thiamine diphosphate.

It carries out the reaction D-glyceraldehyde 3-phosphate + pyruvate + H(+) = 1-deoxy-D-xylulose 5-phosphate + CO2. It functions in the pathway metabolic intermediate biosynthesis; 1-deoxy-D-xylulose 5-phosphate biosynthesis; 1-deoxy-D-xylulose 5-phosphate from D-glyceraldehyde 3-phosphate and pyruvate: step 1/1. Its function is as follows. Catalyzes the acyloin condensation reaction between C atoms 2 and 3 of pyruvate and glyceraldehyde 3-phosphate to yield 1-deoxy-D-xylulose-5-phosphate (DXP). The protein is 1-deoxy-D-xylulose-5-phosphate synthase of Rhizobium johnstonii (strain DSM 114642 / LMG 32736 / 3841) (Rhizobium leguminosarum bv. viciae).